A 1076-amino-acid polypeptide reads, in one-letter code: DNA-directed RNA polymerase subunit beta (1076 aa).

Belongs to the RNA polymerase beta chain family. In plastids the minimal PEP RNA polymerase catalytic core is composed of four subunits: alpha, beta, beta', and beta''. When a (nuclear-encoded) sigma factor is associated with the core the holoenzyme is formed, which can initiate transcription.

The protein localises to the plastid. It carries out the reaction RNA(n) + a ribonucleoside 5'-triphosphate = RNA(n+1) + diphosphate. Functionally, DNA-dependent RNA polymerase catalyzes the transcription of DNA into RNA using the four ribonucleoside triphosphates as substrates. The sequence is that of DNA-directed RNA polymerase subunit beta from Euglena longa (Euglenophycean alga).